Here is a 384-residue protein sequence, read N- to C-terminus: 8-amino-7-oxononanoate synthase (384 aa).

Substrate is bound at residue Arg-21. Residue 108–109 (GF) coordinates pyridoxal 5'-phosphate. Substrate is bound at residue His-133. Ser-179, His-207, and Thr-233 together coordinate pyridoxal 5'-phosphate. At Lys-236 the chain carries N6-(pyridoxal phosphate)lysine. Thr-352 contacts substrate.

This sequence belongs to the class-II pyridoxal-phosphate-dependent aminotransferase family. BioF subfamily. Homodimer. Pyridoxal 5'-phosphate serves as cofactor.

The catalysed reaction is 6-carboxyhexanoyl-[ACP] + L-alanine + H(+) = (8S)-8-amino-7-oxononanoate + holo-[ACP] + CO2. It functions in the pathway cofactor biosynthesis; biotin biosynthesis. In terms of biological role, catalyzes the decarboxylative condensation of pimeloyl-[acyl-carrier protein] and L-alanine to produce 8-amino-7-oxononanoate (AON), [acyl-carrier protein], and carbon dioxide. The sequence is that of 8-amino-7-oxononanoate synthase from Escherichia coli O9:H4 (strain HS).